Consider the following 412-residue polypeptide: Divalent metal cation transporter MntH (412 aa).

The next 11 helical transmembrane spans lie at 19–39 (LALM…GNFA), 46–66 (ASFG…AMLI), 94–114 (VWFY…AEFI), 122–142 (LILG…TFLI), 156–176 (VIGG…IFSQ), 196–216 (AVFL…IYLH), 241–261 (IAMT…AAAF), 290–310 (VFGL…TLAG), 329–349 (TITM…TRIL), 350–370 (VMSQ…LLIF), and 389–409 (IGWM…VGTA).

It belongs to the NRAMP family.

The protein localises to the cell inner membrane. H(+)-stimulated, divalent metal cation uptake system. This Citrobacter koseri (strain ATCC BAA-895 / CDC 4225-83 / SGSC4696) protein is Divalent metal cation transporter MntH.